The primary structure comprises 313 residues: Pyrimidine-specific ribonucleoside hydrolase RihB (313 aa).

The active-site Proton acceptor is the aspartate 11. The Ca(2+) site is built by aspartate 11, aspartate 16, and valine 124. Substrate contacts are provided by glutamine 227 and histidine 239. Ca(2+) is bound at residue aspartate 240.

It belongs to the IUNH family. RihB subfamily. Homotetramer. Requires Ca(2+) as cofactor.

It carries out the reaction a pyrimidine ribonucleoside + H2O = a pyrimidine nucleobase + D-ribose. Its function is as follows. Hydrolyzes cytidine or uridine to ribose and cytosine or uracil, respectively. Has a clear preference for cytidine over uridine. Strictly specific for ribonucleosides. The sequence is that of Pyrimidine-specific ribonucleoside hydrolase RihB from Escherichia coli O17:K52:H18 (strain UMN026 / ExPEC).